Consider the following 218-residue polypeptide: Guanylate kinase (218 aa).

The region spanning 14–193 (GLMLVLSSPS…AFAEVRGIVV (180 aa)) is the Guanylate kinase-like domain. 21 to 28 (SPSGAGKS) provides a ligand contact to ATP.

This sequence belongs to the guanylate kinase family.

It is found in the cytoplasm. The catalysed reaction is GMP + ATP = GDP + ADP. Essential for recycling GMP and indirectly, cGMP. This Mesorhizobium japonicum (strain LMG 29417 / CECT 9101 / MAFF 303099) (Mesorhizobium loti (strain MAFF 303099)) protein is Guanylate kinase (gmk).